The sequence spans 198 residues: Dephospho-CoA kinase (198 aa).

Positions 3–198 constitute a DPCK domain; the sequence is VVGLTGGIGA…HRRYSLLAAA (196 aa). 11–16 serves as a coordination point for ATP; sequence GAGKST.

Belongs to the CoaE family.

It is found in the cytoplasm. The enzyme catalyses 3'-dephospho-CoA + ATP = ADP + CoA + H(+). The protein operates within cofactor biosynthesis; coenzyme A biosynthesis; CoA from (R)-pantothenate: step 5/5. Functionally, catalyzes the phosphorylation of the 3'-hydroxyl group of dephosphocoenzyme A to form coenzyme A. This Methylococcus capsulatus (strain ATCC 33009 / NCIMB 11132 / Bath) protein is Dephospho-CoA kinase.